A 523-amino-acid polypeptide reads, in one-letter code: Putative pentatricopeptide repeat-containing protein At3g15200 (523 aa).

10 PPR repeats span residues 142–172, 177–211, 212–242, 246–280, 281–315, 316–350, 351–385, 388–418, 420–454, and 455–489; these read SSML…MSKR, NEKT…GIDD, DLVA…RRRE, DIKA…KCRP, DVVS…RRNP, DVKI…GPDP, NVVT…GGSC, NDVT…NKCE, TSDL…GLGP, and DQRT…GMVP. The disordered stretch occupies residues 497 to 523; that stretch reads LNQNKTKPRVEDKMLRSNLTSEESESD.

Belongs to the PPR family. P subfamily.

In Arabidopsis thaliana (Mouse-ear cress), this protein is Putative pentatricopeptide repeat-containing protein At3g15200.